The following is a 186-amino-acid chain: PRA1 family protein G2 (186 aa).

The next 4 membrane-spanning stretches (helical) occupy residues 66-86 (YFFV…LITA), 87-107 (SPVA…FHFF), 119-139 (VGDR…IWFT), and 142-162 (AVNL…HAVF).

Belongs to the PRA1 family. As to expression, expressed in roots and trichomes.

It is found in the endoplasmic reticulum membrane. Functionally, may be involved in both secretory and endocytic intracellular trafficking in the endosomal/prevacuolar compartments. This chain is PRA1 family protein G2 (PRA1G2), found in Arabidopsis thaliana (Mouse-ear cress).